Reading from the N-terminus, the 144-residue chain is Large ribosomal subunit protein uL15 (144 aa).

Positions Met-1–Arg-48 are disordered.

It belongs to the universal ribosomal protein uL15 family. In terms of assembly, part of the 50S ribosomal subunit.

Binds to the 23S rRNA. This is Large ribosomal subunit protein uL15 from Chlamydia muridarum (strain MoPn / Nigg).